A 344-amino-acid polypeptide reads, in one-letter code: Isopentenyl-diphosphate delta-isomerase (344 aa).

9-10 (RK) contacts substrate. FMN-binding positions include 65–67 (AMT), Ser-95, and Asn-124. Gln-154 provides a ligand contact to substrate. Glu-155 contributes to the Mg(2+) binding site. Residues Lys-185, Thr-215, 259–261 (GVR), and 280–281 (SG) each bind FMN.

It belongs to the IPP isomerase type 2 family. As to quaternary structure, homooctamer. Dimer of tetramers. FMN is required as a cofactor. The cofactor is NADPH. Requires Mg(2+) as cofactor.

The protein resides in the cytoplasm. It carries out the reaction isopentenyl diphosphate = dimethylallyl diphosphate. Involved in the biosynthesis of isoprenoids. Catalyzes the 1,3-allylic rearrangement of the homoallylic substrate isopentenyl (IPP) to its allylic isomer, dimethylallyl diphosphate (DMAPP). The sequence is that of Isopentenyl-diphosphate delta-isomerase from Lacticaseibacillus casei (strain BL23) (Lactobacillus casei).